The sequence spans 157 residues: Phosphomannomutase (157 aa).

The Phosphoserine intermediate role is filled by serine 98. Residue serine 98 coordinates Mg(2+).

This sequence belongs to the phosphohexose mutase family. It depends on Mg(2+) as a cofactor.

The catalysed reaction is alpha-D-mannose 1-phosphate = D-mannose 6-phosphate. It participates in nucleotide-sugar biosynthesis; GDP-alpha-D-mannose biosynthesis; alpha-D-mannose 1-phosphate from D-fructose 6-phosphate: step 2/2. It functions in the pathway capsule biogenesis; capsule polysaccharide biosynthesis. Involved in the biosynthesis of the K2 capsular polysaccharide biosynthesis. The chain is Phosphomannomutase (manB) from Klebsiella pneumoniae.